The chain runs to 243 residues: Uridylate kinase (243 aa).

Position 18–21 (Lys-18–Gly-21) interacts with ATP. A UMP-binding site is contributed by Gly-59. ATP is bound by residues Gly-60 and Arg-64. Residues Asp-79 and Met-140 to Thr-147 each bind UMP. The ATP site is built by Tyr-173 and Asp-176.

Belongs to the UMP kinase family. In terms of assembly, homohexamer.

Its subcellular location is the cytoplasm. The catalysed reaction is UMP + ATP = UDP + ADP. It participates in pyrimidine metabolism; CTP biosynthesis via de novo pathway; UDP from UMP (UMPK route): step 1/1. With respect to regulation, inhibited by UTP. In terms of biological role, catalyzes the reversible phosphorylation of UMP to UDP. In Corynebacterium efficiens (strain DSM 44549 / YS-314 / AJ 12310 / JCM 11189 / NBRC 100395), this protein is Uridylate kinase.